Consider the following 65-residue polypeptide: Large ribosomal subunit protein bL35 (65 aa).

2 stretches are compositionally biased toward basic residues: residues 1 to 11 (MPKIKTRRSAA) and 21 to 43 (KFKR…RKMR). Positions 1–65 (MPKIKTRRSA…KAVRRMLPNG (65 aa)) are disordered.

The protein belongs to the bacterial ribosomal protein bL35 family.

This chain is Large ribosomal subunit protein bL35, found in Desulfovibrio desulfuricans (strain ATCC 27774 / DSM 6949 / MB).